A 309-amino-acid polypeptide reads, in one-letter code: Protease HtpX homolog (309 aa).

Transmembrane regions (helical) follow at residues 15 to 35 (NAVL…VDVI) and 54 to 74 (IFPT…VVCI). Residue His-165 participates in Zn(2+) binding. Residue Glu-166 is part of the active site. His-169 serves as a coordination point for Zn(2+). Transmembrane regions (helical) follow at residues 181–201 (VGIL…FFMG) and 213–233 (MILL…QMYL). Position 238 (Glu-238) interacts with Zn(2+).

The protein belongs to the peptidase M48B family. Requires Zn(2+) as cofactor.

The protein localises to the cell inner membrane. In Helicobacter acinonychis (strain Sheeba), this protein is Protease HtpX homolog.